Consider the following 418-residue polypeptide: Trimethyllysine dioxygenase, mitochondrial (418 aa).

Residues His239, Asp241, and His386 each coordinate Fe cation.

It belongs to the gamma-BBH/TMLD family. As to quaternary structure, homodimer. It depends on Fe(2+) as a cofactor. L-ascorbate serves as cofactor.

It localises to the mitochondrion matrix. The enzyme catalyses N(6),N(6),N(6)-trimethyl-L-lysine + 2-oxoglutarate + O2 = (3S)-3-hydroxy-N(6),N(6),N(6)-trimethyl-L-lysine + succinate + CO2. The protein operates within amine and polyamine biosynthesis; carnitine biosynthesis. Converts trimethyllysine (TML) into hydroxytrimethyllysine (HTML). The chain is Trimethyllysine dioxygenase, mitochondrial (TMLHE) from Gallus gallus (Chicken).